Here is a 446-residue protein sequence, read N- to C-terminus: Mannan endo-1,6-alpha-mannosidase DCW1 (446 aa).

A signal peptide spans methionine 1–glycine 18. Residues asparagine 31, asparagine 81, asparagine 106, asparagine 200, asparagine 222, asparagine 237, asparagine 262, asparagine 278, asparagine 285, asparagine 334, asparagine 391, and asparagine 397 are each glycosylated (N-linked (GlcNAc...) asparagine). Residues proline 389–proline 408 are disordered. Serine 422 carries the GPI-anchor amidated serine lipid modification. Residues arginine 423–tyrosine 446 constitute a propeptide, removed in mature form.

It belongs to the glycosyl hydrolase 76 family.

Its subcellular location is the secreted. The protein localises to the cell wall. It is found in the cell membrane. It catalyses the reaction Random hydrolysis of (1-&gt;6)-alpha-D-mannosidic linkages in unbranched (1-&gt;6)-mannans.. In terms of biological role, required for normal synthesis of the cell wall. The protein is Mannan endo-1,6-alpha-mannosidase DCW1 (DCW1) of Candida glabrata (strain ATCC 2001 / BCRC 20586 / JCM 3761 / NBRC 0622 / NRRL Y-65 / CBS 138) (Yeast).